A 161-amino-acid chain; its full sequence is Lipid droplet assembly factor 1 (161 aa).

Residues M1–Q43 lie on the Cytoplasmic side of the membrane. The chain crosses the membrane as a helical span at residues Y44 to M61. The Lumenal segment spans residues S62 to G67. A helical membrane pass occupies residues F68–L87. The Cytoplasmic segment spans residues E88–S93. A helical membrane pass occupies residues V94–S110. The Lumenal portion of the chain corresponds to L111–M116. The chain crosses the membrane as a helical span at residues M117–S133. Topologically, residues P134–E161 are cytoplasmic.

The protein belongs to the LDAF1 family. Interacts with isoform 1 and isoform 3 of BSCL2/seipin to form an oligomeric complex. In terms of tissue distribution, expressed at high levels in the heart and skeletal muscle. Expressed at low levels in kidney, small intestine, lung and liver.

The protein localises to the endoplasmic reticulum membrane. Its subcellular location is the lipid droplet. In terms of biological role, plays an important role in the formation of lipid droplets (LD) which are storage organelles at the center of lipid and energy homeostasis. In association with BSCL2/seipin, defines the sites of LD formation in the endoplasmic reticulum. The polypeptide is Lipid droplet assembly factor 1 (Homo sapiens (Human)).